A 443-amino-acid polypeptide reads, in one-letter code: Differentially expressed in FDCP 8 homolog A (443 aa).

The segment at methionine 1 to glutamate 49 is disordered. 2 consecutive Phorbol-ester/DAG-type zinc fingers follow at residues glutamate 134–cysteine 185 and isoleucine 364–cysteine 424.

Belongs to the DEF8 family.

Its function is as follows. Positively regulates lysosome peripheral distribution and ruffled border formation in osteoclasts. Involved in bone resorption. The chain is Differentially expressed in FDCP 8 homolog A (def8-a) from Xenopus laevis (African clawed frog).